Reading from the N-terminus, the 548-residue chain is Chaperonin GroEL (548 aa).

ATP-binding positions include 30–33, K51, 87–91, G415, 479–481, and D495; these read TLGP, DGTTT, and NAA. Residues 526–548 form a disordered region; sequence KEDKSSDLGSAPAGGMGGMGGMM. Positions 537–548 are enriched in gly residues; it reads PAGGMGGMGGMM.

It belongs to the chaperonin (HSP60) family. Forms a cylinder of 14 subunits composed of two heptameric rings stacked back-to-back. Interacts with the co-chaperonin GroES.

It is found in the cytoplasm. It carries out the reaction ATP + H2O + a folded polypeptide = ADP + phosphate + an unfolded polypeptide.. In terms of biological role, together with its co-chaperonin GroES, plays an essential role in assisting protein folding. The GroEL-GroES system forms a nano-cage that allows encapsulation of the non-native substrate proteins and provides a physical environment optimized to promote and accelerate protein folding. The sequence is that of Chaperonin GroEL from Buchnera aphidicola subsp. Pterocomma populeum.